Reading from the N-terminus, the 435-residue chain is ATP-dependent protease ATPase subunit HslU (435 aa).

Residues I18, 60-65, D248, E313, and R385 each bind ATP; that span reads GVGKTE.

Belongs to the ClpX chaperone family. HslU subfamily. As to quaternary structure, a double ring-shaped homohexamer of HslV is capped on each side by a ring-shaped HslU homohexamer. The assembly of the HslU/HslV complex is dependent on binding of ATP.

The protein localises to the cytoplasm. Functionally, ATPase subunit of a proteasome-like degradation complex; this subunit has chaperone activity. The binding of ATP and its subsequent hydrolysis by HslU are essential for unfolding of protein substrates subsequently hydrolyzed by HslV. HslU recognizes the N-terminal part of its protein substrates and unfolds these before they are guided to HslV for hydrolysis. This Rhizobium etli (strain CIAT 652) protein is ATP-dependent protease ATPase subunit HslU.